The sequence spans 892 residues: DNA mismatch repair protein MutS (892 aa).

607-614 (GPNMSGKS) is a binding site for ATP.

It belongs to the DNA mismatch repair MutS family.

Its function is as follows. This protein is involved in the repair of mismatches in DNA. It is possible that it carries out the mismatch recognition step. This protein has a weak ATPase activity. This chain is DNA mismatch repair protein MutS, found in Bacillus cereus (strain AH820).